The primary structure comprises 155 residues: Small ribosomal subunit protein uS7c (155 aa).

This sequence belongs to the universal ribosomal protein uS7 family. As to quaternary structure, part of the 30S ribosomal subunit.

It localises to the plastid. One of the primary rRNA binding proteins, it binds directly to 16S rRNA where it nucleates assembly of the head domain of the 30S subunit. The chain is Small ribosomal subunit protein uS7c (rps7) from Aneura mirabilis (Parasitic liverwort).